Reading from the N-terminus, the 356-residue chain is Heme A synthase (356 aa).

5 consecutive transmembrane segments (helical) span residues Ile-24–Val-44, Phe-106–Met-126, Leu-139–Ser-159, Ala-174–Ile-194, and Ala-214–Ile-234. Residue His-276 coordinates heme. 3 helical membrane passes run Leu-278–Ser-298, Leu-309–Val-329, and Leu-331–Val-351. His-337 contributes to the heme binding site.

Belongs to the COX15/CtaA family. Type 2 subfamily. As to quaternary structure, interacts with CtaB. It depends on heme b as a cofactor.

It localises to the cell membrane. The catalysed reaction is Fe(II)-heme o + 2 A + H2O = Fe(II)-heme a + 2 AH2. Its pathway is porphyrin-containing compound metabolism; heme A biosynthesis; heme A from heme O: step 1/1. Its function is as follows. Catalyzes the conversion of heme O to heme A by two successive hydroxylations of the methyl group at C8. The first hydroxylation forms heme I, the second hydroxylation results in an unstable dihydroxymethyl group, which spontaneously dehydrates, resulting in the formyl group of heme A. The protein is Heme A synthase of Nitrosomonas eutropha (strain DSM 101675 / C91 / Nm57).